The following is a 296-amino-acid chain: MRLAVTGKNGQIALALKAQARPDVEILTLGRPNFDLACRSTVASSIRDAAPDIIVSLAAYTAVDKAESEPYEAFAVNRDGVQALAEAAAGLGVPVIHLSTDYVFDGAKPVPYCEEDRTGPISVYGRSKLEGEFAVASANPNHTILRTSWVYSRYGQNFVKKMLRLADTNDELNVVADQLGCPTSADDISVAVMTIARRMLSSSSADLRGIFHLSGSGEASWAAFAKYVFSVYDEITGRQIKVHDISAAEYPTPARRPANSRLHCDKLERTFGIRLPNWEESTRRLVWALLLEGKDA.

NADH-binding positions include 10-12 (GQI), 35-36 (DL), and 59-61 (AYT). Residues 11–12 (QI), 35–36 (DL), and 59–61 (AYT) each bind NADPH. 100 to 101 (TD) provides a ligand contact to dTDP-beta-L-rhamnose. NADH contacts are provided by Tyr-124 and Lys-128. NADPH-binding residues include Tyr-124 and Lys-128. Catalysis depends on Tyr-124, which acts as the Proton donor/acceptor. Trp-149 contacts dTDP-beta-L-rhamnose.

This sequence belongs to the dTDP-4-dehydrorhamnose reductase family. Homodimer. Mg(2+) is required as a cofactor.

The enzyme catalyses dTDP-beta-L-rhamnose + NADP(+) = dTDP-4-dehydro-beta-L-rhamnose + NADPH + H(+). It functions in the pathway carbohydrate biosynthesis; dTDP-L-rhamnose biosynthesis. Involved in the biosynthesis of the dTDP-L-rhamnose which is an important component of lipopolysaccharide (LPS). Catalyzes the reduction of dTDP-6-deoxy-L-lyxo-4-hexulose to yield dTDP-L-rhamnose. RmlD uses NADH and NADPH nearly equally well. In Sinorhizobium fredii (strain NBRC 101917 / NGR234), this protein is dTDP-4-dehydrorhamnose reductase.